The sequence spans 226 residues: MNSFPAQNLMLSATNANKDSGLRTSNAHWLHSCIAVPKTTGIDLSQEPPAEGVMVPQSHLFPPPIRDSRNDTETVKQKSVNQSPSKALKPKPQRKKRSVSNKSKKTPSIPETKREKKNLDINIDISSFDTSGVPPPVCSCTGVSRVCYKWGMGGWQSSCCTISISTYPLPMSTTRPGARLAGRKMSNGAYVKLLARLADEGYDLSHPLDLKNHWARHGTNKFVTIK.

Residues 42–116 are disordered; sequence IDLSQEPPAE…PSIPETKREK (75 aa). The span at 66–76 shows a compositional bias: basic and acidic residues; it reads RDSRNDTETVK. Residues 88-105 are compositionally biased toward basic residues; the sequence is LKPKPQRKKRSVSNKSKK.

This sequence belongs to the BBR/BPC family. As to expression, expressed in seedlings, leaves and pistils. Detected in anthers, in pollen grains, in young rosette, in leaf vasculature, in the lateral and primary roots, in embryo sac, and in the whole ovule.

It is found in the nucleus. Transcriptional regulator that specifically binds to GA-rich elements (GAGA-repeats) present in regulatory sequences of genes involved in developmental processes. This is Protein BASIC PENTACYSTEINE7 (BPC7) from Arabidopsis thaliana (Mouse-ear cress).